A 273-amino-acid polypeptide reads, in one-letter code: Shikimate dehydrogenase (NADP(+)) (273 aa).

Shikimate is bound by residues 19 to 21 (SQS) and threonine 66. Lysine 70 (proton acceptor) is an active-site residue. Glutamate 82 is an NADP(+) binding site. Shikimate contacts are provided by asparagine 91 and aspartate 107. NADP(+)-binding positions include 131-135 (GAGGA) and methionine 217. Tyrosine 219 lines the shikimate pocket. Glycine 241 lines the NADP(+) pocket.

This sequence belongs to the shikimate dehydrogenase family. Homodimer.

The enzyme catalyses shikimate + NADP(+) = 3-dehydroshikimate + NADPH + H(+). Its pathway is metabolic intermediate biosynthesis; chorismate biosynthesis; chorismate from D-erythrose 4-phosphate and phosphoenolpyruvate: step 4/7. Its function is as follows. Involved in the biosynthesis of the chorismate, which leads to the biosynthesis of aromatic amino acids. Catalyzes the reversible NADPH linked reduction of 3-dehydroshikimate (DHSA) to yield shikimate (SA). The sequence is that of Shikimate dehydrogenase (NADP(+)) from Buchnera aphidicola subsp. Schizaphis graminum (strain Sg).